The sequence spans 443 residues: Signal recognition particle 54 kDa protein (443 aa).

GTP-binding positions include 104–111, 184–188, and 242–245; these read GLQGSGKT, DTAGR, and TKLD.

This sequence belongs to the GTP-binding SRP family. SRP54 subfamily. In terms of assembly, part of the signal recognition particle protein translocation system, which is composed of SRP and FtsY. Archaeal SRP consists of a 7S RNA molecule of 300 nucleotides and two protein subunits: SRP54 and SRP19.

The protein resides in the cytoplasm. The catalysed reaction is GTP + H2O = GDP + phosphate + H(+). In terms of biological role, involved in targeting and insertion of nascent membrane proteins into the cytoplasmic membrane. Binds to the hydrophobic signal sequence of the ribosome-nascent chain (RNC) as it emerges from the ribosomes. The SRP-RNC complex is then targeted to the cytoplasmic membrane where it interacts with the SRP receptor FtsY. This is Signal recognition particle 54 kDa protein from Methanosarcina barkeri (strain Fusaro / DSM 804).